A 476-amino-acid polypeptide reads, in one-letter code: Aspartyl/glutamyl-tRNA(Asn/Gln) amidotransferase subunit B (476 aa).

The protein belongs to the GatB/GatE family. GatB subfamily. In terms of assembly, heterotrimer of A, B and C subunits.

It carries out the reaction L-glutamyl-tRNA(Gln) + L-glutamine + ATP + H2O = L-glutaminyl-tRNA(Gln) + L-glutamate + ADP + phosphate + H(+). The catalysed reaction is L-aspartyl-tRNA(Asn) + L-glutamine + ATP + H2O = L-asparaginyl-tRNA(Asn) + L-glutamate + ADP + phosphate + 2 H(+). Allows the formation of correctly charged Asn-tRNA(Asn) or Gln-tRNA(Gln) through the transamidation of misacylated Asp-tRNA(Asn) or Glu-tRNA(Gln) in organisms which lack either or both of asparaginyl-tRNA or glutaminyl-tRNA synthetases. The reaction takes place in the presence of glutamine and ATP through an activated phospho-Asp-tRNA(Asn) or phospho-Glu-tRNA(Gln). The protein is Aspartyl/glutamyl-tRNA(Asn/Gln) amidotransferase subunit B of Clostridium botulinum (strain Langeland / NCTC 10281 / Type F).